A 271-amino-acid chain; its full sequence is Rhomboid-type serine protease 2 (271 aa).

6 helical membrane-spanning segments follow: residues 16–36 (GLAV…NLVY), 64–84 (HLSF…IVMF), 89–111 (GTLY…YCLI), 115–137 (LFPN…YFAV), 152–172 (FSFP…LLAP), and 176–196 (LPGH…ENWV). Serine 125 (nucleophile) is an active-site residue. Histidine 179 is an active-site residue. The disordered stretch occupies residues 252 to 271 (HNTDTPAEPTFQGNGRVLGN).

The protein belongs to the peptidase S54 family.

Its subcellular location is the golgi apparatus membrane. The protein localises to the golgi apparatus. The protein resides in the cis-Golgi network membrane. It catalyses the reaction Cleaves type-1 transmembrane domains using a catalytic dyad composed of serine and histidine that are contributed by different transmembrane domains.. Probable rhomboid-type serine protease that catalyzes intramembrane proteolysis. In Kluyveromyces lactis (strain ATCC 8585 / CBS 2359 / DSM 70799 / NBRC 1267 / NRRL Y-1140 / WM37) (Yeast), this protein is Rhomboid-type serine protease 2 (RBD2).